The primary structure comprises 642 residues: Extracellular metalloproteinase 5 (642 aa).

The N-terminal stretch at 1-19 is a signal peptide; the sequence is MHGLLLAAGLLSLPLHVLA. Positions 20–246 are excised as a propeptide; sequence HPQPSTTTSL…VHNVVDYVAH (227 aa). The N-linked (GlcNAc...) asparagine glycan is linked to N287. Zn(2+) is bound at residue H430. Residue E431 is part of the active site. Zn(2+) is bound at residue H434. N595 and N624 each carry an N-linked (GlcNAc...) asparagine glycan.

It belongs to the peptidase M36 family. The cofactor is Zn(2+).

The protein resides in the secreted. Functionally, secreted metalloproteinase that allows assimilation of proteinaceous substrates and probably acts as a virulence factor. The sequence is that of Extracellular metalloproteinase 5 (MEP5) from Arthroderma gypseum (strain ATCC MYA-4604 / CBS 118893) (Microsporum gypseum).